A 220-amino-acid chain; its full sequence is Miraculin (220 aa).

The first 29 residues, 1–29 (MKELTMLSLSFFFVSALLAAAANPLLSAA), serve as a signal peptide directing secretion. Asn-71 is a glycosylation site (N-linked (GlcNAc...) asparagine). 3 disulfide bridges follow: Cys-76/Cys-121, Cys-177/Cys-188, and Cys-181/Cys-184. Residue Asn-215 is glycosylated (N-linked (GlcNAc...) asparagine).

It belongs to the protease inhibitor I3 (leguminous Kunitz-type inhibitor) family. In terms of assembly, homotetramer; dimer of homodimer. In terms of processing, glycosylated; contains as much as 13,9% of sugars (glucosamine, mannose, galactose, xylose, and fucose). In terms of tissue distribution, expressed in fruit pulp after pollination. Not expressed in seeds, stems or leaves.

Functionally, miraculin has the property of modifying a sour taste into a sweet taste. This alteration of taste perception persists for many minutes. This is Miraculin from Synsepalum dulcificum (Miracle fruit).